A 184-amino-acid polypeptide reads, in one-letter code: Elongation factor P (184 aa).

The protein belongs to the elongation factor P family.

Its subcellular location is the cytoplasm. It participates in protein biosynthesis; polypeptide chain elongation. Functionally, involved in peptide bond synthesis. Stimulates efficient translation and peptide-bond synthesis on native or reconstituted 70S ribosomes in vitro. Probably functions indirectly by altering the affinity of the ribosome for aminoacyl-tRNA, thus increasing their reactivity as acceptors for peptidyl transferase. This Polaromonas sp. (strain JS666 / ATCC BAA-500) protein is Elongation factor P.